The primary structure comprises 1040 residues: Probable starch synthase 4, chloroplastic/amyloplastic (1040 aa).

The N-terminal 42 residues, M1 to S42, are a transit peptide targeting the chloroplast. The segment at C43–E142 is disordered. 2 stretches are compositionally biased toward basic and acidic residues: residues D52–K61 and N112–I124. The stretch at E187–E466 forms a coiled coil. The ADP site is built by K556, G559, and D562. (1,4-alpha-D-glucosyl)n contacts are provided by W679 and Q680. Residues R849, K854, K906, D908, Y916, L933, and T934 each contribute to the ADP site.

The protein belongs to the glycosyltransferase 1 family. Bacterial/plant glycogen synthase subfamily. Interacts with PTST2. Interacts with PII1; the interaction is essential for the initiation of starch granules biosynthesis in leaf chloroplasts. In terms of tissue distribution, expressed in leaves and flowers.

The protein resides in the plastid. Its subcellular location is the chloroplast. The protein localises to the amyloplast. It is found in the chloroplast stroma. The catalysed reaction is [(1-&gt;4)-alpha-D-glucosyl](n) + ADP-alpha-D-glucose = [(1-&gt;4)-alpha-D-glucosyl](n+1) + ADP + H(+). It functions in the pathway glycan biosynthesis; starch biosynthesis. In terms of biological role, probably involved in the priming of starch granule formation. May play a regulatory role in the control of starch accumulation in plastids. Is necessary and sufficient to establish the correct number of starch granules observed in chloroplasts. The chain is Probable starch synthase 4, chloroplastic/amyloplastic from Arabidopsis thaliana (Mouse-ear cress).